The following is a 2371-amino-acid chain: Highly reducing polyketide synthase ntnH (2371 aa).

The Ketosynthase family 3 (KS3) domain occupies 10–429 (PSPIAIVGIG…GANAHVILEG (420 aa)). Catalysis depends on for beta-ketoacyl synthase activity residues Cys-180, His-316, and His-352. The interval 528–796 (FIFTGQGAQW…NSCLSRGADA (269 aa)) is malonyl-CoA:ACP transacylase (MAT) domain. Positions 858–986 (HELLGARVIG…GKVHPGNAST (129 aa)) are N-terminal hotdog fold. Residues 858–1142 (HELLGARVIG…GIRFRILENN (285 aa)) form a dehydratase (DH) domain region. Residues 858-1145 (HELLGARVIG…FRILENNRSK (288 aa)) enclose the PKS/mFAS DH domain. Residue His-890 is the Proton acceptor; for dehydratase activity of the active site. Positions 1001-1145 (VRGVISAKWY…FRILENNRSK (145 aa)) are C-terminal hotdog fold. The Proton donor; for dehydratase activity role is filled by Asp-1059. The tract at residues 1309–1456 (FFQLLGHNKK…FENVTAIMDQ (148 aa)) is methyltransferase (CMet) domain. The tract at residues 1669–1968 (GLLSSLQWQG…GHRPIGAICI (300 aa)) is enoyl reductase (ER) (ER) domain. Residues 1993 to 2167 (SYVLIGGLGG…ASVIDLGVME (175 aa)) form a ketoreductase (KR) domain region. One can recognise a Carrier domain in the interval 2280–2362 (EDETAVAEFL…DLGKLARSRI (83 aa)). Ser-2322 carries the O-(pantetheine 4'-phosphoryl)serine modification.

The protein operates within secondary metabolite biosynthesis; terpenoid biosynthesis. Its function is as follows. Highly reducing polyketide synthase; part of the gene cluster that mediates the biosynthesis of the meroterpenoids nectripenoids A and B, as well as cochliquninone D and isocochliquninone E. The pathway probably begins with the HR-PKS ntnH that catalyzes two chain-extension steps to form a reduced triketide, which then primes the SAT domain in the NR-PKS ntnG to initiate three more cycles of extension to give a linear hexaketide corresponding to the polyketide part of nectripenoids. The FAD-dependent monooxygenase ntnJ then performs an oxidative decarboxylation at C11 of the ntnH/ntnG product, via an electrophilic aromatic hydroxylation with concomitant ipso-decarboxylation. The membrane-bound polyprenyl transferase ntnF then introduces a farnesyl group before the FAD-dependent monooxygenase ntnK functions as the first epoxidase on terminal C12'-C13' olefin, followed by a second epoxidation on C7'-C8' catalyzed by ntnA. The terpene cyclase/mutase ntnI then initiates the sequential tricyclic ring formation through protonation of the terminal epoxide and catalyzes the regioselective and stereoselective 6/6/6-tricyclic ring formation. The cytochrome P450 monooxygenase ntnM may then hydroxylate C1'. The polypeptide is Highly reducing polyketide synthase ntnH (Nectria sp).